Here is a 610-residue protein sequence, read N- to C-terminus: Dihydroxy-acid dehydratase (610 aa).

Asp81 is a Mg(2+) binding site. Position 122 (Cys122) interacts with [2Fe-2S] cluster. 2 residues coordinate Mg(2+): Asp123 and Lys124. N6-carboxylysine is present on Lys124. Residue Cys193 participates in [2Fe-2S] cluster binding. Glu489 serves as a coordination point for Mg(2+). Ser515 serves as the catalytic Proton acceptor.

It belongs to the IlvD/Edd family. Homodimer. [2Fe-2S] cluster is required as a cofactor. It depends on Mg(2+) as a cofactor.

The catalysed reaction is (2R)-2,3-dihydroxy-3-methylbutanoate = 3-methyl-2-oxobutanoate + H2O. It carries out the reaction (2R,3R)-2,3-dihydroxy-3-methylpentanoate = (S)-3-methyl-2-oxopentanoate + H2O. The protein operates within amino-acid biosynthesis; L-isoleucine biosynthesis; L-isoleucine from 2-oxobutanoate: step 3/4. It functions in the pathway amino-acid biosynthesis; L-valine biosynthesis; L-valine from pyruvate: step 3/4. Its function is as follows. Functions in the biosynthesis of branched-chain amino acids. Catalyzes the dehydration of (2R,3R)-2,3-dihydroxy-3-methylpentanoate (2,3-dihydroxy-3-methylvalerate) into 2-oxo-3-methylpentanoate (2-oxo-3-methylvalerate) and of (2R)-2,3-dihydroxy-3-methylbutanoate (2,3-dihydroxyisovalerate) into 2-oxo-3-methylbutanoate (2-oxoisovalerate), the penultimate precursor to L-isoleucine and L-valine, respectively. The chain is Dihydroxy-acid dehydratase from Xylella fastidiosa (strain M23).